Consider the following 200-residue polypeptide: NAD(P)H dehydrogenase (quinone) (200 aa).

Positions 4–190 (VLVLYYSTYG…EGARFQGRHV (187 aa)) constitute a Flavodoxin-like domain. FMN is bound by residues 10-15 (STYGHV) and 78-80 (TRY). Tyr-12 serves as a coordination point for NAD(+). Residue Trp-98 coordinates substrate. Residues 113–119 (STASQHG) and His-134 each bind FMN.

Belongs to the WrbA family. FMN serves as cofactor.

The enzyme catalyses a quinone + NADH + H(+) = a quinol + NAD(+). It catalyses the reaction a quinone + NADPH + H(+) = a quinol + NADP(+). The polypeptide is NAD(P)H dehydrogenase (quinone) (Methylobacterium radiotolerans (strain ATCC 27329 / DSM 1819 / JCM 2831 / NBRC 15690 / NCIMB 10815 / 0-1)).